A 424-amino-acid polypeptide reads, in one-letter code: Tubulin-specific chaperone cofactor E-like protein (424 aa).

Phosphoserine occurs at positions 18 and 41. 7 LRR repeats span residues 73 to 98 (CAHVSELDLSDNKLEDWHEVSKIVSN), 99 to 123 (VPQLEFLNLSSNPLNLSVLERTCAG), 124 to 147 (SFSGVRKLVLNNSKASWETVHMIL), 150 to 172 (LPDLEELFLCLNDYETVSCPSIC), 173 to 197 (CHSLKLLHITDNNLQDWTEIRKLGV), 199 to 224 (FPSLDTLVLANNHLNAIEEPDDSLAR), and 226 to 250 (FPNLRSISLHKSGLQSWEDIDKLNS). Positions 262-303 (IPLLQPYTTEERRKLVIARLPSVSKLNGSVVTDGEREDSERF) constitute an LRRCT domain. The region spanning 334 to 424 (AEVDLRPQSS…DKIYVESKTK (91 aa)) is the Ubiquitin-like domain. Residues 349 to 375 (HFNDQVEEMSIRLDQTVAELKKQLKTL) adopt a coiled-coil conformation.

Abundantly expressed in testis, but is also present in several tissues at a much lower level.

It localises to the cytoplasm. The protein localises to the cytoskeleton. Its function is as follows. Acts as a regulator of tubulin stability. The protein is Tubulin-specific chaperone cofactor E-like protein (TBCEL) of Homo sapiens (Human).